A 72-amino-acid polypeptide reads, in one-letter code: Translation initiation factor IF-1 2 (72 aa).

Positions 1–72 constitute an S1-like domain; that stretch reads MSKDDVIEVE…TRGRIVYRYK (72 aa).

It belongs to the IF-1 family. Component of the 30S ribosomal translation pre-initiation complex which assembles on the 30S ribosome in the order IF-2 and IF-3, IF-1 and N-formylmethionyl-tRNA(fMet); mRNA recruitment can occur at any time during PIC assembly.

It is found in the cytoplasm. Functionally, one of the essential components for the initiation of protein synthesis. Stabilizes the binding of IF-2 and IF-3 on the 30S subunit to which N-formylmethionyl-tRNA(fMet) subsequently binds. Helps modulate mRNA selection, yielding the 30S pre-initiation complex (PIC). Upon addition of the 50S ribosomal subunit IF-1, IF-2 and IF-3 are released leaving the mature 70S translation initiation complex. This chain is Translation initiation factor IF-1 2, found in Symbiobacterium thermophilum (strain DSM 24528 / JCM 14929 / IAM 14863 / T).